Consider the following 308-residue polypeptide: Protoheme IX farnesyltransferase (308 aa).

The next 9 helical transmembrane spans lie at 20–40, 53–73, 102–122, 124–144, 149–169, 170–190, 227–249, 254–276, and 288–308; these read VLAY…VTAI, PLLI…ANTF, NALV…WWTT, LLSG…YTLL, TSQN…IGWS, AITD…FFWT, LIYT…WLYM, VAGA…GEPV, and YLAV…PTLF.

It belongs to the UbiA prenyltransferase family. Protoheme IX farnesyltransferase subfamily.

It localises to the cell membrane. The catalysed reaction is heme b + (2E,6E)-farnesyl diphosphate + H2O = Fe(II)-heme o + diphosphate. The protein operates within porphyrin-containing compound metabolism; heme O biosynthesis; heme O from protoheme: step 1/1. Functionally, converts heme B (protoheme IX) to heme O by substitution of the vinyl group on carbon 2 of heme B porphyrin ring with a hydroxyethyl farnesyl side group. In Mycobacterium leprae (strain TN), this protein is Protoheme IX farnesyltransferase.